The following is a 179-amino-acid chain: Large ribosomal subunit protein uL5 (179 aa).

Belongs to the universal ribosomal protein uL5 family. Part of the 50S ribosomal subunit; part of the 5S rRNA/L5/L18/L25 subcomplex. Contacts the 5S rRNA and the P site tRNA. Forms a bridge to the 30S subunit in the 70S ribosome.

Functionally, this is one of the proteins that bind and probably mediate the attachment of the 5S RNA into the large ribosomal subunit, where it forms part of the central protuberance. In the 70S ribosome it contacts protein S13 of the 30S subunit (bridge B1b), connecting the 2 subunits; this bridge is implicated in subunit movement. Contacts the P site tRNA; the 5S rRNA and some of its associated proteins might help stabilize positioning of ribosome-bound tRNAs. The protein is Large ribosomal subunit protein uL5 of Lawsonia intracellularis (strain PHE/MN1-00).